The primary structure comprises 319 residues: Replication factor C small subunit 2 (319 aa).

Glycine 44 to threonine 51 is a binding site for ATP.

Belongs to the activator 1 small subunits family. RfcS subfamily. Heteromultimer composed of small subunits (RfcS) and large subunits (RfcL).

Its function is as follows. Part of the RFC clamp loader complex which loads the PCNA sliding clamp onto DNA. This Pyrobaculum aerophilum (strain ATCC 51768 / DSM 7523 / JCM 9630 / CIP 104966 / NBRC 100827 / IM2) protein is Replication factor C small subunit 2.